Here is a 668-residue protein sequence, read N- to C-terminus: tRNA 5-methylaminomethyl-2-thiouridine biosynthesis bifunctional protein MnmC (668 aa).

The interval 1 to 245 (MKHYSIQPAN…KREMLCGVME (245 aa)) is tRNA (mnm(5)s(2)U34)-methyltransferase. Positions 270–668 (IGGGIASALL…LLKGKAVKAG (399 aa)) are FAD-dependent cmnm(5)s(2)U34 oxidoreductase.

It in the N-terminal section; belongs to the methyltransferase superfamily. tRNA (mnm(5)s(2)U34)-methyltransferase family. The protein in the C-terminal section; belongs to the DAO family. The cofactor is FAD.

It is found in the cytoplasm. The catalysed reaction is 5-aminomethyl-2-thiouridine(34) in tRNA + S-adenosyl-L-methionine = 5-methylaminomethyl-2-thiouridine(34) in tRNA + S-adenosyl-L-homocysteine + H(+). Catalyzes the last two steps in the biosynthesis of 5-methylaminomethyl-2-thiouridine (mnm(5)s(2)U) at the wobble position (U34) in tRNA. Catalyzes the FAD-dependent demodification of cmnm(5)s(2)U34 to nm(5)s(2)U34, followed by the transfer of a methyl group from S-adenosyl-L-methionine to nm(5)s(2)U34, to form mnm(5)s(2)U34. The protein is tRNA 5-methylaminomethyl-2-thiouridine biosynthesis bifunctional protein MnmC of Escherichia coli (strain K12 / DH10B).